The primary structure comprises 125 residues: Holo-[acyl-carrier-protein] synthase (125 aa).

Mg(2+)-binding residues include Asp8 and Glu57.

It belongs to the P-Pant transferase superfamily. AcpS family. Mg(2+) is required as a cofactor.

The protein resides in the cytoplasm. The catalysed reaction is apo-[ACP] + CoA = holo-[ACP] + adenosine 3',5'-bisphosphate + H(+). Transfers the 4'-phosphopantetheine moiety from coenzyme A to a Ser of acyl-carrier-protein. This chain is Holo-[acyl-carrier-protein] synthase, found in Neisseria meningitidis serogroup C (strain 053442).